Here is a 221-residue protein sequence, read N- to C-terminus: U1 small nuclear ribonucleoprotein C (221 aa).

The Matrin-type zinc finger occupies 4 to 36; the sequence is HYCDYCDVFLTHDSVSVRKAHNSGRNHLQNVRE. A disordered region spans residues 80–221; sequence GAGPLSGSSD…PHSRTGYGPR (142 aa). Residues 142-158 are compositionally biased toward pro residues; sequence YSRPPPQGGPYSRPPPD. Positions 178-190 are enriched in low complexity; the sequence is PLGYGAPLPGAYP. Pro residues predominate over residues 191-204; the sequence is SGPPPNMRGPPPPL.

It belongs to the U1 small nuclear ribonucleoprotein C family. As to quaternary structure, U1 snRNP is composed of the 7 core Sm proteins B/B', D1, D2, D3, E, F and G that assemble in a heptameric protein ring on the Sm site of the small nuclear RNA to form the core snRNP, and at least 3 U1 snRNP-specific proteins U1-70K, U1-A and U1-C. U1-C interacts with U1 snRNA and the 5' splice-site region of the pre-mRNA.

It localises to the nucleus. Functionally, component of the spliceosomal U1 snRNP, which is essential for recognition of the pre-mRNA 5' splice-site and the subsequent assembly of the spliceosome. U1-C is directly involved in initial 5' splice-site recognition for both constitutive and regulated alternative splicing. The interaction with the 5' splice-site seems to precede base-pairing between the pre-mRNA and the U1 snRNA. Stimulates commitment or early (E) complex formation by stabilizing the base pairing of the 5' end of the U1 snRNA and the 5' splice-site region. The polypeptide is U1 small nuclear ribonucleoprotein C (Mycosarcoma maydis (Corn smut fungus)).